A 420-amino-acid chain; its full sequence is Protein-lysine 6-oxidase (420 aa).

Residues 1–27 (MRCAPPGLLLAQLHACIFWSGLWPAGC) form the signal peptide. Residues 28–171 (QSPPAAWRQR…RPGREDVMVG (144 aa)) constitute a propeptide, removed by BMP1. The segment at 54 to 177 (AQYQPPRRRQ…VMVGDDPYSP (124 aa)) is disordered. Asparagine 78 carries an N-linked (GlcNAc...) asparagine glycan. Low complexity predominate over residues 82–92 (PRAAAAAAARP). Positions 93–105 (QPEPQPQAQPQPR) are enriched in pro residues. Basic residues-rich tracts occupy residues 107 to 119 (RSSR…RRHW) and 134 to 147 (APRR…SRRR). Tyrosine 190 bears the Sulfotyrosine mark. Residues 216-420 (PDLVPDPYYI…YASGCTISPY (205 aa)) form a lysyl-oxidase like region. 5 disulfide bridges follow: cysteine 241–cysteine 247, cysteine 294–cysteine 343, cysteine 327–cysteine 333, cysteine 354–cysteine 364, and cysteine 401–cysteine 415. Residues histidine 295, histidine 297, and histidine 299 each coordinate Cu cation. Positions 323–358 (KASFCLEDTSCDYGYYRRYACTAHTQGLSPGCYDTY) form a cross-link, lysine tyrosylquinone (Lys-Tyr). Tyrosine 358 carries the 2',4',5'-topaquinone modification.

Belongs to the lysyl oxidase family. The cofactor is Cu cation. Lysine tyrosylquinone residue serves as cofactor. In terms of processing, the lysine tyrosylquinone cross-link (LTQ) is generated by condensation of the epsilon-amino group of a lysine with a topaquinone produced by oxidation of tyrosine. Proteolytically cleaved by BMP1 which removes the propeptide. Also proteolytically cleaved by ADAMTS2 and ADAMTS14, but not by ADAMTS3, at an additional cleavage site downstream of the BMP1 cleavage site. The propeptide plays a role in directing the deposition of this enzyme to elastic fibers, via interaction with tropoelastin. Cleavage by BMP1 to remove the propeptide does not increase enzymatic activity but increases binding to collagen. Cleavage by ADAMTS2 produces a form with reduced collagen-binding activity. Post-translationally, sulfated at Tyr-190 and also at either Tyr-186 or Tyr-187 which enhances binding to collagen.

Its subcellular location is the secreted. The protein resides in the extracellular space. It catalyses the reaction L-lysyl-[protein] + O2 + H2O = (S)-2-amino-6-oxohexanoyl-[protein] + H2O2 + NH4(+). Its function is as follows. Responsible for the post-translational oxidative deamination of peptidyl lysine residues in precursors to fibrous collagen and elastin. In addition to cross linking of extracellular matrix proteins, it may have a direct role in tumor suppression. This is Protein-lysine 6-oxidase (LOX) from Gallus gallus (Chicken).